A 355-amino-acid polypeptide reads, in one-letter code: UDP-N-acetylglucosamine--N-acetylmuramyl-(pentapeptide) pyrophosphoryl-undecaprenol N-acetylglucosamine transferase (355 aa).

UDP-N-acetyl-alpha-D-glucosamine contacts are provided by residues 15-17 (TGG), Asn-127, Arg-163, Ser-191, Ile-244, 263-268 (ALTVSE), and Gln-288.

It belongs to the glycosyltransferase 28 family. MurG subfamily.

Its subcellular location is the cell inner membrane. The catalysed reaction is di-trans,octa-cis-undecaprenyl diphospho-N-acetyl-alpha-D-muramoyl-L-alanyl-D-glutamyl-meso-2,6-diaminopimeloyl-D-alanyl-D-alanine + UDP-N-acetyl-alpha-D-glucosamine = di-trans,octa-cis-undecaprenyl diphospho-[N-acetyl-alpha-D-glucosaminyl-(1-&gt;4)]-N-acetyl-alpha-D-muramoyl-L-alanyl-D-glutamyl-meso-2,6-diaminopimeloyl-D-alanyl-D-alanine + UDP + H(+). It participates in cell wall biogenesis; peptidoglycan biosynthesis. Its function is as follows. Cell wall formation. Catalyzes the transfer of a GlcNAc subunit on undecaprenyl-pyrophosphoryl-MurNAc-pentapeptide (lipid intermediate I) to form undecaprenyl-pyrophosphoryl-MurNAc-(pentapeptide)GlcNAc (lipid intermediate II). The polypeptide is UDP-N-acetylglucosamine--N-acetylmuramyl-(pentapeptide) pyrophosphoryl-undecaprenol N-acetylglucosamine transferase (Photorhabdus laumondii subsp. laumondii (strain DSM 15139 / CIP 105565 / TT01) (Photorhabdus luminescens subsp. laumondii)).